The chain runs to 123 residues: MALLKISVVVPEGEVYTGEVKSVVLPGVEGEFGVLYGHSNMITLLQAGVIEIETENQKEHIAINWGYAEVTKERVDILADGAVFIKKESDDRDDAISRAKKLLEDASSDRLAVSSVLAKIESL.

This sequence belongs to the ATPase epsilon chain family. In terms of assembly, F-type ATPases have 2 components, CF(1) - the catalytic core - and CF(0) - the membrane proton channel. CF(1) has five subunits: alpha(3), beta(3), gamma(1), delta(1), epsilon(1). CF(0) has three main subunits: a, b and c.

Its subcellular location is the cell inner membrane. In terms of biological role, produces ATP from ADP in the presence of a proton gradient across the membrane. This chain is ATP synthase epsilon chain, found in Helicobacter pylori (strain G27).